A 284-amino-acid chain; its full sequence is Pantothenate synthetase (284 aa).

An ATP-binding site is contributed by 30 to 37; sequence MGNLHDGH. The active-site Proton donor is the His-37. Residue Gln-61 coordinates (R)-pantoate. Gln-61 is a beta-alanine binding site. 149 to 152 contacts ATP; that stretch reads GEKD. Gln-155 lines the (R)-pantoate pocket. Residues Val-178 and 186–189 each bind ATP; that span reads LSSR.

It belongs to the pantothenate synthetase family. In terms of assembly, homodimer.

The protein resides in the cytoplasm. The catalysed reaction is (R)-pantoate + beta-alanine + ATP = (R)-pantothenate + AMP + diphosphate + H(+). It functions in the pathway cofactor biosynthesis; (R)-pantothenate biosynthesis; (R)-pantothenate from (R)-pantoate and beta-alanine: step 1/1. Its function is as follows. Catalyzes the condensation of pantoate with beta-alanine in an ATP-dependent reaction via a pantoyl-adenylate intermediate. The chain is Pantothenate synthetase from Erwinia tasmaniensis (strain DSM 17950 / CFBP 7177 / CIP 109463 / NCPPB 4357 / Et1/99).